The primary structure comprises 231 residues: Cytidylate kinase (231 aa).

18–26 contributes to the ATP binding site; the sequence is GPSGTGKSS.

This sequence belongs to the cytidylate kinase family. Type 1 subfamily.

The protein localises to the cytoplasm. The catalysed reaction is CMP + ATP = CDP + ADP. It carries out the reaction dCMP + ATP = dCDP + ADP. This is Cytidylate kinase from Streptomyces griseus subsp. griseus (strain JCM 4626 / CBS 651.72 / NBRC 13350 / KCC S-0626 / ISP 5235).